Consider the following 275-residue polypeptide: 2,3,4,5-tetrahydropyridine-2,6-dicarboxylate N-succinyltransferase (275 aa).

2 residues coordinate substrate: arginine 104 and aspartate 141.

It belongs to the transferase hexapeptide repeat family. As to quaternary structure, homotrimer.

It is found in the cytoplasm. The catalysed reaction is (S)-2,3,4,5-tetrahydrodipicolinate + succinyl-CoA + H2O = (S)-2-succinylamino-6-oxoheptanedioate + CoA. It participates in amino-acid biosynthesis; L-lysine biosynthesis via DAP pathway; LL-2,6-diaminopimelate from (S)-tetrahydrodipicolinate (succinylase route): step 1/3. The protein is 2,3,4,5-tetrahydropyridine-2,6-dicarboxylate N-succinyltransferase of Mannheimia succiniciproducens (strain KCTC 0769BP / MBEL55E).